Consider the following 365-residue polypeptide: Saoe class I histocompatibility antigen, C alpha chain (365 aa).

The signal sequence occupies residues 1–24; that stretch reads MTIMAPRTLLLLLSGALSVTETWA. Positions 25–114 are alpha-1; sequence GSHSMRYFST…LLGYYNQSEA (90 aa). Residues 25–308 are Extracellular-facing; sequence GSHSMRYFST…EPPSQPTIPI (284 aa). A glycan (N-linked (GlcNAc...) asparagine) is linked at asparagine 110. The alpha-2 stretch occupies residues 115 to 206; the sequence is GFHTIQWMYG…ENGKEMLQRA (92 aa). Intrachain disulfides connect cysteine 125–cysteine 188 and cysteine 227–cysteine 283. The alpha-3 stretch occupies residues 207 to 298; sequence EPPKTHVTHH…GLPEPFTLRW (92 aa). Residues 209–297 form the Ig-like C1-type domain; sequence PKTHVTHHPV…EGLPEPFTLR (89 aa). Positions 299 to 308 are connecting peptide; it reads EPPSQPTIPI. A helical membrane pass occupies residues 309–332; that stretch reads MGIVAILAILGAVVTGAVVAAVMW. Residues 333–365 are Cytoplasmic-facing; the sequence is RKKSSDKKGGSYSQAARSDSAQGSDVSLTACKV. The segment at 337–365 is disordered; sequence SDKKGGSYSQAARSDSAQGSDVSLTACKV. A compositionally biased stretch (polar residues) spans 346-359; that stretch reads QAARSDSAQGSDVS. Phosphoserine occurs at positions 356 and 359.

This sequence belongs to the MHC class I family. As to quaternary structure, heterodimer of an alpha chain and a beta chain (beta-2-microglobulin).

It localises to the membrane. In terms of biological role, involved in the presentation of foreign antigens to the immune system. This Saguinus oedipus (Cotton-top tamarin) protein is Saoe class I histocompatibility antigen, C alpha chain.